Consider the following 246-residue polypeptide: Uridylate kinase (246 aa).

20 to 23 lines the ATP pocket; the sequence is KISG. Residues 28–33 are involved in allosteric activation by GTP; it reads GDQGYG. Glycine 62 is a UMP binding site. Residues glycine 63 and arginine 67 each coordinate ATP. UMP-binding positions include aspartate 82 and 143-150; that span reads TGNPYFTT. Residues threonine 170, tyrosine 176, and aspartate 179 each contribute to the ATP site.

Belongs to the UMP kinase family. In terms of assembly, homohexamer.

The protein resides in the cytoplasm. The catalysed reaction is UMP + ATP = UDP + ADP. The protein operates within pyrimidine metabolism; CTP biosynthesis via de novo pathway; UDP from UMP (UMPK route): step 1/1. Allosterically activated by GTP. Inhibited by UTP. In terms of biological role, catalyzes the reversible phosphorylation of UMP to UDP. In Cereibacter sphaeroides (strain ATCC 17025 / ATH 2.4.3) (Rhodobacter sphaeroides), this protein is Uridylate kinase.